The following is a 270-amino-acid chain: Phosphatidate cytidylyltransferase (270 aa).

7 helical membrane-spanning segments follow: residues 19–39 (LWLT…IGLA), 53–73 (TAFS…LLIL), 76–96 (GALL…VTQW), 101–121 (GWPA…SLLR), 126–146 (FGFT…ITAY), 183–203 (LVAS…ALLL), and 248–268 (ALLY…AIFF).

Belongs to the CDS family.

The protein localises to the cell inner membrane. The catalysed reaction is a 1,2-diacyl-sn-glycero-3-phosphate + CTP + H(+) = a CDP-1,2-diacyl-sn-glycerol + diphosphate. The protein operates within phospholipid metabolism; CDP-diacylglycerol biosynthesis; CDP-diacylglycerol from sn-glycerol 3-phosphate: step 3/3. The polypeptide is Phosphatidate cytidylyltransferase (cdsA) (Brucella abortus (strain 2308)).